We begin with the raw amino-acid sequence, 551 residues long: Gliomedin (551 aa).

The Cytoplasmic portion of the chain corresponds to 1 to 17 (MARGAEGGRGDAGWGLR). Residues 18-39 (GALAAVALLSALNAAGTVFALC) traverse the membrane as a helical; Signal-anchor for type II membrane protein segment. Topologically, residues 40–551 (QWRGLSSALR…VQFLSTTLNQ (512 aa)) are extracellular. The disordered stretch occupies residues 72-107 (LSRAPRGASAPPQDPASSARNKRSHSGEPAPHIRAE). Residues 79–90 (ASAPPQDPASSA) show a composition bias toward low complexity. Residue N130 is glycosylated (N-linked (GlcNAc...) asparagine). Collagen-like domains lie at 137-195 (LTGP…RGEK) and 196-222 (GDHG…KGDV). Residues 139–282 (GPSGPPGPPG…GETCAIPNDD (144 aa)) are disordered. 2 stretches are compositionally biased toward basic and acidic residues: residues 191–200 (ERGEKGDHGE) and 213–222 (KGEKGDKGDV). A compositionally biased stretch (pro residues) spans 237–253 (PPGPPGPPGPPGPPGPP). One can recognise an Olfactomedin-like domain in the interval 299-546 (QAESMITSIG…LMLYPVQFLS (248 aa)). N-linked (GlcNAc...) asparagine glycans are attached at residues N329, N357, N378, and N464.

Homotrimer (via collagen-like domains). Interacts with NRCAM and NFASC/neurofascin. Interaction with glial NRCAM enhances interaction with axonal NFASC. Interacts with MYOC. Post-translationally, N-glycosylated. In terms of processing, proteolytic processing by a furin-like protease causes shedding of the ectodomain. Further cleavage by BMP1 releases the olfactomedin-like domain. Specifically expressed in spinal cord, brain, placenta and sciatic nerve. More abundant in peripheral than central nervous system.

It localises to the cell membrane. The protein resides in the cell projection. The protein localises to the axon. Its subcellular location is the secreted. It is found in the extracellular space. It localises to the extracellular matrix. Its function is as follows. Ligand for NRCAM and NFASC/neurofascin that plays a role in the formation and maintenance of the nodes of Ranvier on myelinated axons. Mediates interaction between Schwann cell microvilli and axons via its interactions with NRCAM and NFASC. Nodes of Ranvier contain clustered sodium channels that are crucial for the saltatory propagation of action potentials along myelinated axons. During development, nodes of Ranvier are formed by the fusion of two heminodes. Required for normal clustering of sodium channels at heminodes; not required for the formation of mature nodes with normal sodium channel clusters. Required, together with NRCAM, for maintaining NFASC and sodium channel clusters at mature nodes of Ranvier. The sequence is that of Gliomedin (GLDN) from Homo sapiens (Human).